A 235-amino-acid polypeptide reads, in one-letter code: Aspartate/glutamate leucyltransferase (235 aa).

It belongs to the R-transferase family. Bpt subfamily.

The protein localises to the cytoplasm. It carries out the reaction N-terminal L-glutamyl-[protein] + L-leucyl-tRNA(Leu) = N-terminal L-leucyl-L-glutamyl-[protein] + tRNA(Leu) + H(+). The enzyme catalyses N-terminal L-aspartyl-[protein] + L-leucyl-tRNA(Leu) = N-terminal L-leucyl-L-aspartyl-[protein] + tRNA(Leu) + H(+). Its function is as follows. Functions in the N-end rule pathway of protein degradation where it conjugates Leu from its aminoacyl-tRNA to the N-termini of proteins containing an N-terminal aspartate or glutamate. The protein is Aspartate/glutamate leucyltransferase of Pseudomonas aeruginosa (strain LESB58).